The chain runs to 113 residues: uncharacterized protein (113 aa).

The segment covering 1–19 has biased composition (basic and acidic residues); the sequence is MDKKSAHRNPEDAKAGKYE. Residues 1 to 94 form a disordered region; the sequence is MDKKSAHRNP…NKWRGKRKVS (94 aa). The span at 20 to 41 shows a compositional bias: basic residues; it reads GKHKRKKKRKQNQNQHRSRHRS. The segment covering 52 to 66 has biased composition (low complexity); the sequence is FPSSSSSSSGSQTDS. Basic residues predominate over residues 75-92; the sequence is KIKKKRREKTNKWRGKRK.

This is an uncharacterized protein from Macaca fascicularis (Crab-eating macaque).